The following is a 495-amino-acid chain: MEIRKLSLSTIRSIITSLSVLVLVISASATLVRSTPPNVLEQVLASGELRVISTNGATTFYEGSDGLTGFEYSLLKGFADSLGVNLAIENQADTRELLHAVEQRQYHMGSAELTALESQDYHLSFAKPYMQITQQLVYNHRLGTPTSIKDLKGKEVLILADSAHSKRVARLQKKFPNLTWRPIENGQMIDLLEMVHKGEADYAVIDSNAYELHRYSYPRAKLAFDISNPQPLAWAFPHSKDTSLFDAAQRYMAQIKRDGSLAQVTKHFFERHIDEVTTGEAMVFAYRLQNRFPQWSDAMKSAATEFDLDWQMLAAIGYQESHWLADAESHTGVRGLMMLTKRTARAMGVNNREDPLQSIYGGAKYFRMMLDRLPERIQGDDRLNLALAAYNQGAGHLEDARVLTQRMGGNPDKWEDVRKYMPLLSKSQYYSRAKHGYMRGWEPVQFVDNVRNYHKIIAWHEQQNELRLASYSGGALSSLHKAPTETAAQGENLSL.

The signal sequence occupies residues 1 to 29 (MEIRKLSLSTIRSIITSLSVLVLVISASA). The segment at 30-273 (TLVRSTPPNV…VTKHFFERHI (244 aa)) is non-LT domain. Residues 274–495 (DEVTTGEAMV…TAAQGENLSL (222 aa)) are LT domain. Glu-320 is an active-site residue.

In the N-terminal section; belongs to the bacterial solute-binding protein 3 family. It in the C-terminal section; belongs to the transglycosylase Slt family.

It is found in the cell outer membrane. The catalysed reaction is Exolytic cleavage of the (1-&gt;4)-beta-glycosidic linkage between N-acetylmuramic acid (MurNAc) and N-acetylglucosamine (GlcNAc) residues in peptidoglycan, from either the reducing or the non-reducing ends of the peptidoglycan chains, with concomitant formation of a 1,6-anhydrobond in the MurNAc residue.. Its function is as follows. Murein-degrading enzyme that degrades murein glycan strands and insoluble, high-molecular weight murein sacculi, with the concomitant formation of a 1,6-anhydromuramoyl product. Lytic transglycosylases (LTs) play an integral role in the metabolism of the peptidoglycan (PG) sacculus. Their lytic action creates space within the PG sacculus to allow for its expansion as well as for the insertion of various structures such as secretion systems and flagella. This Cellvibrio japonicus (strain Ueda107) (Pseudomonas fluorescens subsp. cellulosa) protein is Membrane-bound lytic murein transglycosylase F.